The chain runs to 503 residues: GMP synthase [glutamine-hydrolyzing] (503 aa).

The Glutamine amidotransferase type-1 domain maps to 1 to 189 (MVLVLDFGSQ…FLELAGAKRD (189 aa)). Cysteine 78 serves as the catalytic Nucleophile. Active-site residues include histidine 164 and glutamate 166. The region spanning 190–378 (WTPEHVLEEL…LGLPDTLRLR (189 aa)) is the GMPS ATP-PPase domain. 217-223 (SGGVDSS) lines the ATP pocket.

Homodimer.

The enzyme catalyses XMP + L-glutamine + ATP + H2O = GMP + L-glutamate + AMP + diphosphate + 2 H(+). It functions in the pathway purine metabolism; GMP biosynthesis; GMP from XMP (L-Gln route): step 1/1. Its function is as follows. Catalyzes the synthesis of GMP from XMP. The protein is GMP synthase [glutamine-hydrolyzing] of Thermus thermophilus (strain ATCC BAA-163 / DSM 7039 / HB27).